Here is a 274-residue protein sequence, read N- to C-terminus: Tryptase beta-2 (274 aa).

A signal peptide spans 1 to 19; the sequence is MLKLLLLLALSPLASLVHA. Positions 20 to 29 are cleaved as a propeptide — activation peptide; the sequence is APCPVKQRVG. The Peptidase S1 domain occupies 30–271; that stretch reads IVGGREASES…YLDWIHRYVP (242 aa). A disulfide bond links C58 and C74. Catalysis depends on H73, which acts as the Charge relay system. Residue Y96 is modified to Phosphotyrosine. N104 carries N-linked (GlcNAc...) asparagine glycosylation. D120 (charge relay system) is an active-site residue. Residue N131 is glycosylated (N-linked (GlcNAc...) asparagine). 3 disulfide bridges follow: C154-C229, C187-C210, and C219-C247. The active-site Charge relay system is the S223.

The protein belongs to the peptidase S1 family. Tryptase subfamily. Homotetramer. The active tetramer is converted to inactive monomers at neutral and acidic pH in the absence of heparin. Low concentrations of inactive monomers become active monomers at pH 6.0 in the presence of heparin. When the concentration of active monomers is higher, they convert to active monomers and then to active tetramers. These monomers are active and functionally distinct from the tetrameric enzyme. In contrast to the hidden active sites in the tetrameric form, the active site of the monomeric form is accessible for macromolecular proteins and inhibitors, e.g. fibrinogen which is a substrate for the monomeric but not for the tetrameric form. The monomeric form forms a complex with SERPINB6.

The protein resides in the secreted. The catalysed reaction is Preferential cleavage: Arg-|-Xaa, Lys-|-Xaa, but with more restricted specificity than trypsin.. Tryptase is the major neutral protease present in mast cells and is secreted upon the coupled activation-degranulation response of this cell type. Plays a role in innate immunity. This chain is Tryptase beta-2 (Tpsb2), found in Rattus norvegicus (Rat).